A 712-amino-acid polypeptide reads, in one-letter code: Dipeptidyl-peptidase 7 (712 aa).

Positions 1 to 23 (MQMKLKSILLGAALLLGASGVAK) are cleaved as a signal peptide. The active-site Charge relay system is H89. Positions 136-173 (TDKVEGQLKGITDEMERLRKAQEVCQELAKKENADENQ) form a coiled coil. Catalysis depends on charge relay system residues D225 and S648.

This sequence belongs to the peptidase S46 family.

It is found in the cell outer membrane. Its activity is regulated as follows. Is inhibited in vitro by typical serine protease inhibitors like diisopropyl fluorophosphate, Pefablock, and 3,4-dichloroisocoumarin, but not by typical cysteine class inhibitors such as E-64 or iododoacetic acid. In terms of biological role, catalyzes the removal of dipeptides from the N-terminus of oligopeptides. Shows a broad specificity for both aliphatic and aromatic residues in the P1 position, with glycine or proline being not acceptable in this position. Most potently cleaves the synthetic substrate Met-Leu-methylcoumaryl-7-amide (Met-Leu-MCA), Leu-Arg-MCA and Lys-Ala-MCA to a lesser extent. Is likely involved in amino acid metabolism and bacterial growth of asaccharolytic P.gingivalis, that utilizes amino acids from extracellular proteinaceous nutrients as energy and carbon sources. In Porphyromonas gingivalis (strain ATCC 33277 / DSM 20709 / CIP 103683 / JCM 12257 / NCTC 11834 / 2561), this protein is Dipeptidyl-peptidase 7.